The sequence spans 374 residues: Anthranilate O-methyltransferase 2 (374 aa).

Y18 contributes to the S-adenosyl-L-homocysteine binding site. Anthranilate is bound at residue Q25. C59, N64, D98, L99, S142, and Y143 together coordinate S-adenosyl-L-homocysteine. Position 164 (W164) interacts with anthranilate. Residues E261 and F263 each coordinate Mg(2+).

It belongs to the methyltransferase superfamily. Type-7 methyltransferase family. SABATH subfamily.

The catalysed reaction is anthranilate + S-adenosyl-L-methionine = O-methyl anthranilate + S-adenosyl-L-homocysteine. Its function is as follows. Methyltransferase involved in the biosynthesis of methyl anthranilate in response to stresses. Utilizes anthranilic acid as substrate. Produces exclusively the O-methyl ester. This is Anthranilate O-methyltransferase 2 (AAMT2) from Zea mays (Maize).